The primary structure comprises 236 residues: Small ribosomal subunit protein uS2c (236 aa).

The protein belongs to the universal ribosomal protein uS2 family.

The protein localises to the plastid. It localises to the chloroplast. The sequence is that of Small ribosomal subunit protein uS2c (rps2) from Cucumis sativus (Cucumber).